Here is a 154-residue protein sequence, read N- to C-terminus: Host transcription reprogramming factor 5 (154 aa).

An N-terminal signal peptide occupies residues methionine 1 to alanine 19. The interval threonine 24–arginine 85 is disordered. The span at glutamine 35–aspartate 50 shows a compositional bias: polar residues. A compositionally biased stretch (basic and acidic residues) spans glutamate 69 to arginine 85. A C2H2-type; degenerate zinc finger spans residues tyrosine 96–histidine 121.

The protein localises to the secreted. It localises to the host nucleus. Functionally, probable secreted effector that translocates into the nuclei of host cells to reprogram the expression of targeted genes by binding on effector binding elements in rice. This is Host transcription reprogramming factor 5 from Pyricularia oryzae (strain 70-15 / ATCC MYA-4617 / FGSC 8958) (Rice blast fungus).